The following is a 150-amino-acid chain: Large ribosomal subunit protein bL9 (150 aa).

It belongs to the bacterial ribosomal protein bL9 family.

In terms of biological role, binds to the 23S rRNA. The sequence is that of Large ribosomal subunit protein bL9 from Shewanella loihica (strain ATCC BAA-1088 / PV-4).